The primary structure comprises 341 residues: MMLLLPLLAVFLVKRSHTRTHSLRYFRLAVSDPGPVVPEFISVGYVDSHPITTYDSVTRQKEPKAPWMAENLAPDHWERYTQLLRGWQQTFKAELRHLQRHYNHSGLHTYQRMIGCELLEDGSTTGFLQYAYDGQDFIIFNKDTLSWLAMDYVAHITKQAWEANLHELQYQKNWLEEECIAWLKRFLEYGRDTLERTEHPVVRTTRKETFPGITTFFCRAHGFYPPEISMTWMKNGEEIAQEVDYGGVLPSGDGTYQTWLSVNLDPQSNDVYSCHVEHCGRQMVLEAPRESGDILRVSTISGTTILIIALAGVGVLIWRRSQELKEVMYQPTQVNEGSSPS.

Residues 1 to 18 (MMLLLPLLAVFLVKRSHT) form the signal peptide. The alpha-1 stretch occupies residues 19 to 105 (RTHSLRYFRL…RHLQRHYNHS (87 aa)). The segment at 19–197 (RTHSLRYFRL…EYGRDTLERT (179 aa)) is antigen-binding cleft. The Extracellular segment spans residues 19–296 (RTHSLRYFRL…APRESGDILR (278 aa)). Tyrosine 25 and arginine 27 together coordinate 8-(9H-purin-6-yl)-2-oxa-8-azabicyclo[3.3.1]nona-3,6-diene-4,6-dicarbaldehyde. Residues arginine 27, serine 42, and lysine 61 each contribute to the 5-(2-oxoethylideneamino)-6-(D-ribitylamino)uracil site. 5-(2-oxopropylideneamino)-6-(D-ribitylamino)uracil is bound by residues arginine 27, serine 42, and lysine 61. 3 residues coordinate 7-hydroxy-6-methyl-8-(1-D-ribityl)lumazine: arginine 27, serine 42, and lysine 61. Residues lysine 61 and histidine 76 each coordinate 8-(9H-purin-6-yl)-2-oxa-8-azabicyclo[3.3.1]nona-3,6-diene-4,6-dicarbaldehyde. Lysine 61 provides a ligand contact to 2-amino-4-oxopteridine-6-carbaldehyde. Lysine 61 contributes to the pyridoxal binding site. N-linked (GlcNAc...) asparagine glycosylation occurs at asparagine 103. The tract at residues 106 to 197 (GLHTYQRMIG…EYGRDTLERT (92 aa)) is alpha-2. Arginine 112 lines the 8-(9H-purin-6-yl)-2-oxa-8-azabicyclo[3.3.1]nona-3,6-diene-4,6-dicarbaldehyde pocket. 3 residues coordinate 5-(2-oxoethylideneamino)-6-(D-ribitylamino)uracil: arginine 112, tyrosine 170, and glutamine 171. The 5-(2-oxopropylideneamino)-6-(D-ribitylamino)uracil site is built by arginine 112, tyrosine 170, and glutamine 171. 7-hydroxy-6-methyl-8-(1-D-ribityl)lumazine is bound by residues arginine 112, tyrosine 170, and glutamine 171. 2 disulfide bridges follow: cysteine 116–cysteine 179 and cysteine 218–cysteine 274. Residues 198 to 289 (EHPVVRTTRK…GRQMVLEAPR (92 aa)) form an alpha-3 region. Residues 200-301 (PVVRTTRKET…GDILRVSTIS (102 aa)) enclose the Ig-like C1-type domain. The connecting peptide stretch occupies residues 290-296 (ESGDILR). The chain crosses the membrane as a helical span at residues 297–317 (VSTISGTTILIIALAGVGVLI). Over 318 to 341 (WRRSQELKEVMYQPTQVNEGSSPS) the chain is Cytoplasmic.

Belongs to the MHC class I family. Heterotrimer that consists of MR1, B2M and metabolite antigen. Major classes of metabolite ligands presented by MR1 include riboflavin-related antigens, pyrimidines and ribityl lumazines, nucleobase adducts and folate derivatives. Forms reversible covalent Schiff base complexes with microbial pyrimidine-based metabolite, which serves as a molecular switch triggering complete folding, stable association with B2M and translocation of the ternary complex from endoplasmic reticulum to the plasma membrane. Alternatively, forms non-Schiff base complexes with ribityl lumazines. On antigen-presenting cells, the ternary complex interacts with TCR on MR1-restricted CD4- or CD8-positive T cell subsets. Interacts with TAPBP and TAPBPL chaperones in the endoplasmic reticulum. TAPBP associated or not with MHC class I peptide loading complex binds ligand-free MR1 or MR1-B2M complex, providing for stable MR1 pools ready for metabolite antigen processing. TAPBPL interacts with MR1 in a ligand-independent way; this interaction may stabilize MR1 pool and facilitate ligand loading and dissociation. Structurally, MR1-B2M heterodimer adopts a topology similar to classical MHC class I molecules, with alpha-1 and alpha-2 domains of MR1 forming the antigen-binding cleft composed of two alpha-helices resting on a floor of 7-stranded anti-parallel beta-pleated sheet. In terms of processing, N-glycosylated. As to expression, highly expressed thymus. Expressed in liver, kidney, spleen, heart, brain, lung, skeletal muscle and testis.

It localises to the cell membrane. The protein localises to the endoplasmic reticulum membrane. It is found in the golgi apparatus membrane. Its subcellular location is the early endosome membrane. The protein resides in the late endosome membrane. Its function is as follows. Antigen-presenting molecule specialized in displaying microbial pyrimidine-based metabolites to alpha-beta T cell receptors (TCR) on innate-type mucosal-associated invariant T (MAIT) cells. In complex with B2M preferentially presents riboflavin-derived metabolites to semi-invariant TRAV1 TCRs on MAIT cells, guiding immune surveillance of the microbial metabolome at mucosal epithelial barriers. Signature pyrimidine-based microbial antigens are generated via non-enzymatic condensation of metabolite intermediates of the riboflavin pathway with by-products arising from other metabolic pathways such as glycolysis. Typical potent antigenic metabolites are 5-(2-oxoethylideneamino)-6-D-ribitylaminouracil (5-OE-RU) and 5-(2-oxopropylideneamino)-6-D-ribitylaminouracil (5-OP-RU), products of condensation of 5-amino-6-D-ribityaminouracil (5-A-RU) with glyoxal or methylglyoxal by-products, respectively. May present microbial antigens to various TRAV1-negative MAIT cell subsets, providing for unique recognition of diverse microbes, including pathogens that do not synthesize riboflavin. Upon antigen recognition, elicits rapid innate-type MAIT cell activation to eliminate pathogenic microbes by directly killing infected cells. During T cell development, drives thymic selection and post-thymic terminal differentiation of MAIT cells in a process dependent on commensal microflora. Acts as an immune sensor of cancer cell metabolome. May present a tumor-specific or -associated metabolite essential for cancer cell survival to a pan-cancer TCR on a non-MAIT CD8-positive T cell clone, triggering T cell-mediated killing of a wide range of cancer cell types. May present tumor-enriched pyridoxal and pyridoxal 5'-phosphate antigens, enabling preferential recognition of cancer cells. Presents nucleobase carbonyl adducts generated during oxidative stress. Captures M3Ade, a nucleobase adduct composed of one adenine modified by a malondialdehyde trimer, for recognition by MR1-restricted T cell clones expressing a polyclonal TCR repertoire. In Mus musculus (Mouse), this protein is Major histocompatibility complex class I-related protein 1.